A 339-amino-acid chain; its full sequence is NADP-dependent dehydrogenase M3 (339 aa).

Positions 49, 51, 93, 206, 210, 240, and 244 each coordinate NADP(+). Y206 acts as the Proton acceptor in catalysis. Residue K210 is the Lowers pKa of active site Tyr of the active site.

Belongs to the short-chain dehydrogenases/reductases (SDR) family. Homodimer.

Its subcellular location is the cytoplasm. It localises to the cytosol. It participates in secondary metabolite biosynthesis. In terms of biological role, NADP-dependent dehydrogenase; part of the gene cluster that mediates the biosynthesis of squalestatin S1 (SQS1, also known as zaragozic acid A), a heavily oxidized fungal polyketide that offers potent cholesterol lowering activity by targeting squalene synthase (SS). SQS1 is composed of a 2,8-dioxobicyclic[3.2.1]octane-3,4,5-tricarboxyclic acid core that is connected to two lipophilic polyketide arms. These initial steps feature the priming of an unusual benzoic acid starter unit onto the highly reducing polyketide synthase pks2, followed by oxaloacetate extension and product release to generate a tricarboxylic acid containing product. The phenylalanine ammonia lyase (PAL) M7 and the acyl-CoA ligase M9 are involved in transforming phenylalanine into benzoyl-CoA. The citrate synthase-like protein R3 is involved in connecting the C-alpha-carbons of the hexaketide chain and oxaloacetate to afford the tricarboxylic acid unit. The potential hydrolytic enzymes, M8 and M10, are in close proximity to pks2 and may participate in product release. On the other side, the tetraketide arm is synthesized by a the squalestatin tetraketide synthase pks1 and enzymatically esterified to the core in the last biosynthetic step, by the acetyltransferase M4. The biosynthesis of the tetraketide must involve 3 rounds of chain extension. After the first and second rounds methyl-transfer occurs, and in all rounds of extension the ketoreductase and dehydratase are active. The enoyl reductase and C-MeT of pks1 are not active in the final round of extension. The acetyltransferase M4 appears to have a broad substrate selectivity for its acyl CoA substrate, allowing the in vitro synthesis of novel squalestatins. The biosynthesis of SQS1 requires several oxidative steps likely performed by oxidoreductases M1, R1 and R2. Finally, in support of the identification of the cluster as being responsible for SQS1 production, the cluster contains a gene encoding a putative squalene synthase (SS) R6, suggesting a likely mechanism for self-resistance. This chain is NADP-dependent dehydrogenase M3, found in Phoma sp. (strain ATCC 20986 / MF5453).